Here is a 77-residue protein sequence, read N- to C-terminus: Acyl carrier protein (77 aa).

Positions 2 to 77 constitute a Carrier domain; the sequence is ADVLERVTKI…DAVTYIESHL (76 aa). Ser-37 bears the O-(pantetheine 4'-phosphoryl)serine mark.

Belongs to the acyl carrier protein (ACP) family. In terms of processing, 4'-phosphopantetheine is transferred from CoA to a specific serine of apo-ACP by AcpS. This modification is essential for activity because fatty acids are bound in thioester linkage to the sulfhydryl of the prosthetic group.

The protein localises to the cytoplasm. It functions in the pathway lipid metabolism; fatty acid biosynthesis. Its function is as follows. Carrier of the growing fatty acid chain in fatty acid biosynthesis. The protein is Acyl carrier protein of Bacillus mycoides (strain KBAB4) (Bacillus weihenstephanensis).